Consider the following 78-residue polypeptide: Beta-defensin 105A (78 aa).

An N-terminal signal peptide occupies residues 1-27 (MALIRKTFYFLFAVFFILVQLPSGCQA). 3 cysteine pairs are disulfide-bonded: cysteine 46-cysteine 74, cysteine 53-cysteine 67, and cysteine 57-cysteine 73.

This sequence belongs to the beta-defensin family.

It is found in the secreted. Has antimicrobial activity. The chain is Beta-defensin 105A (DEFB105A) from Hylobates lar (Lar gibbon).